The primary structure comprises 64 residues: MAFDKKLLEVLACPVCKGKLVLNEDMTQLVCRFDRLAFDIKDGIPVLIESKATALSLDEVDATR.

This sequence belongs to the UPF0434 family.

The protein is UPF0434 protein MADE_1009415 of Alteromonas mediterranea (strain DSM 17117 / CIP 110805 / LMG 28347 / Deep ecotype).